A 371-amino-acid chain; its full sequence is Phospho-N-acetylmuramoyl-pentapeptide-transferase (371 aa).

9 consecutive transmembrane segments (helical) span residues 19–39 (LYWL…IYSG), 48–68 (IVAP…WAVP), 95–115 (TMGG…WVAA), 119–139 (NLLE…VGWF), 155–175 (AKLR…WLFL), 180–200 (ISGL…FLAI), 227–247 (AIAF…LMIF), 284–304 (AVGL…LFLV), and 349–369 (VVST…GLNA).

The protein belongs to the glycosyltransferase 4 family. MraY subfamily. It depends on Mg(2+) as a cofactor.

The protein localises to the cell inner membrane. It catalyses the reaction UDP-N-acetyl-alpha-D-muramoyl-L-alanyl-gamma-D-glutamyl-meso-2,6-diaminopimeloyl-D-alanyl-D-alanine + di-trans,octa-cis-undecaprenyl phosphate = di-trans,octa-cis-undecaprenyl diphospho-N-acetyl-alpha-D-muramoyl-L-alanyl-D-glutamyl-meso-2,6-diaminopimeloyl-D-alanyl-D-alanine + UMP. It participates in cell wall biogenesis; peptidoglycan biosynthesis. Its function is as follows. Catalyzes the initial step of the lipid cycle reactions in the biosynthesis of the cell wall peptidoglycan: transfers peptidoglycan precursor phospho-MurNAc-pentapeptide from UDP-MurNAc-pentapeptide onto the lipid carrier undecaprenyl phosphate, yielding undecaprenyl-pyrophosphoryl-MurNAc-pentapeptide, known as lipid I. The polypeptide is Phospho-N-acetylmuramoyl-pentapeptide-transferase (Acaryochloris marina (strain MBIC 11017)).